A 487-amino-acid chain; its full sequence is MSLPNSSCLLEDKMCEGNKTTMASPQLMPLVVVLSTICLVTVGLNLLVLYAVRSERKLHTVGNLYIVSLSVADLIVGAVVMPMNILYLLMSKWSLGRPLCLFWLSMDYVASTASIFSVFILCIDRYRSVQQPLRYLKYRTKTRASATILGAWFLSFLWVIPILGWNHFMQQTSVRREDKCETDFYDVTWFKVMTAIINFYLPTLLMLWFYAKIYKAVRQHCQHRELINGSLPSFSEIKLRPENPKGDAKKPGKESPWEVLKRKPKDAGGGSVLKSPSQTXKEMKSPVVFSQEDDREVDKLHCFPLDIVPMQTAAEGSSRDYVAVNQSHGQLKTDEQGLNTHGASEISEDQMLGDSQSFSRTDSDTTTETAPGKGKLRSGSNTGLDYIKFTWKRLRSHSRQYVSGLHMNRERKAAKQLGFIMAAFILCWIPYFIFFMVIAFCKNCCNEHLHMFTIWLGYINSTLNPLIYPLCNENFKKTFKRILHIRS.

Residues 1–29 are Extracellular-facing; that stretch reads MSLPNSSCLLEDKMCEGNKTTMASPQLMP. 2 N-linked (GlcNAc...) asparagine glycosylation sites follow: asparagine 5 and asparagine 18. A helical transmembrane segment spans residues 30 to 50; sequence LVVVLSTICLVTVGLNLLVLY. Residues 51 to 64 are Cytoplasmic-facing; the sequence is AVRSERKLHTVGNL. The helical transmembrane segment at 65-89 threads the bilayer; sequence YIVSLSVADLIVGAVVMPMNILYLL. Over 90–97 the chain is Extracellular; the sequence is MSKWSLGR. Residues 98–123 form a helical membrane-spanning segment; that stretch reads PLCLFWLSMDYVASTASIFSVFILCI. Cysteine 100 and cysteine 180 are disulfide-bonded. Histamine is bound by residues aspartate 107 and threonine 112. The segment at 107 to 112 is important for agonist binding; the sequence is DYVAST. Residues 124–144 are Cytoplasmic-facing; that stretch reads DRYRSVQQPLRYLKYRTKTRA. 2 positions are modified to phosphothreonine: threonine 140 and threonine 142. A helical membrane pass occupies residues 145 to 164; that stretch reads SATILGAWFLSFLWVIPILG. Residues 165–188 lie on the Extracellular side of the membrane; the sequence is WNHFMQQTSVRREDKCETDFYDVT. A helical membrane pass occupies residues 189–211; it reads WFKVMTAIINFYLPTLLMLWFYA. Asparagine 198 contacts histamine. At 212 to 416 the chain is on the cytoplasmic side; the sequence is KIYKAVRQHC…MNRERKAAKQ (205 aa). The residue at position 230 (serine 230) is a Phosphoserine. Residues 238–261 show a composition bias toward basic and acidic residues; sequence KLRPENPKGDAKKPGKESPWEVLK. Residues 238–292 are disordered; the sequence is KLRPENPKGDAKKPGKESPWEVLKRKPKDAGGGSVLKSPSQTXKEMKSPVVFSQE. A Phosphothreonine modification is found at threonine 279. Residues serine 344 and serine 347 each carry the phosphoserine modification. A disordered region spans residues 345 to 379; sequence EISEDQMLGDSQSFSRTDSDTTTETAPGKGKLRSG. The segment covering 353 to 369 has biased composition (polar residues); sequence GDSQSFSRTDSDTTTET. Phosphoserine occurs at positions 380, 396, and 398. A helical membrane pass occupies residues 417 to 440; that stretch reads LGFIMAAFILCWIPYFIFFMVIAF. Residues 424-428 form an important for agonist binding region; sequence FILCW. Tyrosine 431 is a binding site for histamine. Cysteines 441 and 444 form a disulfide. The Extracellular segment spans residues 441–446; sequence CKNCCN. A helical membrane pass occupies residues 447 to 469; the sequence is EHLHMFTIWLGYINSTLNPLIYP. Topologically, residues 470–487 are cytoplasmic; that stretch reads LCNENFKKTFKRILHIRS.

This sequence belongs to the G-protein coupled receptor 1 family. Post-translationally, phosphorylation at sites in the second and third cytoplasmic loops independently contribute to agonist-induced receptor down-regulation.

The protein localises to the cell membrane. Functionally, G-protein-coupled receptor for histamine, a biogenic amine that functions as an immune modulator and a neurotransmitter. Through the H1 receptor, histamine mediates the contraction of smooth muscles and increases capillary permeability due to contraction of terminal venules. Also mediates neurotransmission in the central nervous system and thereby regulates circadian rhythms, emotional and locomotor activities as well as cognitive functions. The protein is Histamine H1 receptor of Pan troglodytes (Chimpanzee).